We begin with the raw amino-acid sequence, 61 residues long: MDPNCSCAAGVSCTCAGSCKCKECKCTSCKKSCCSCCPVGCSKCAQGCVCKGASEKCSCCD.

Position 1 is an N-acetylmethionine (methionine 1). Positions 1-29 (MDPNCSCAAGVSCTCAGSCKCKECKCTSC) are beta. The a divalent metal cation site is built by cysteine 5, cysteine 7, cysteine 13, cysteine 15, cysteine 19, cysteine 21, cysteine 24, cysteine 26, cysteine 29, cysteine 33, cysteine 34, cysteine 36, cysteine 37, cysteine 41, cysteine 44, cysteine 48, cysteine 50, and cysteine 57. An alpha region spans residues 30–61 (KKSCCSCCPVGCSKCAQGCVCKGASEKCSCCD). Position 58 is a phosphoserine (serine 58). Cysteine 59 and cysteine 60 together coordinate a divalent metal cation.

The protein belongs to the metallothionein superfamily. Type 1 family. Monomer.

Its function is as follows. Metallothioneins have a high content of cysteine residues that bind various heavy metals; these proteins are transcriptionally regulated by both heavy metals and glucocorticoids. This is Metallothionein-1F (MT1F) from Homo sapiens (Human).